We begin with the raw amino-acid sequence, 196 residues long: Probable splicing factor, arginine/serine-rich 4 (196 aa).

The region spanning 19–97 (TSLKIDNLSY…RELRVTLAKY (79 aa)) is the RRM domain. Residues 91 to 106 (RVTLAKYDRPSDERGG) show a composition bias toward basic and acidic residues. A disordered region spans residues 91–196 (RVTLAKYDRP…SPSRSRSNSR (106 aa)). Positions 112 to 141 (GRRRSRSPRRRSRSPRYSRSRSPRRSRSRT) are enriched in basic residues. 2 stretches are compositionally biased toward basic and acidic residues: residues 145-160 (PSRDRRDSPDRRDNSR) and 167-176 (PPREDGSPKE). Residues 184 to 196 (ASRSPSRSRSNSR) show a composition bias toward low complexity.

It belongs to the splicing factor SR family. In terms of processing, extensively phosphorylated on serine residues in the RS domain.

The protein resides in the nucleus. Functionally, may play a functionally redundant role in embryogenesis. In Caenorhabditis elegans, this protein is Probable splicing factor, arginine/serine-rich 4 (rsp-4).